A 290-amino-acid chain; its full sequence is uncharacterized protein (290 aa).

Residues 2–238 (LKTENLSVGY…EIVNELYDLK (237 aa)) enclose the ABC transporter domain. 34 to 41 (GPNGAGKS) contacts ATP.

Belongs to the ABC transporter superfamily.

This is an uncharacterized protein from Methanocaldococcus jannaschii (strain ATCC 43067 / DSM 2661 / JAL-1 / JCM 10045 / NBRC 100440) (Methanococcus jannaschii).